A 364-amino-acid polypeptide reads, in one-letter code: Rhomboid domain-containing protein 2 (364 aa).

The next 5 helical transmembrane spans lie at 11-31 (WCLC…SLLV), 63-83 (LVTY…AIII), 100-120 (CFFT…FEAV), 158-178 (FGMV…SWLI), and 184-204 (LSNV…CYSI). Disordered stretches follow at residues 242–282 (AQSR…KLAS) and 317–364 (SSVY…VPMP). Polar residues-rich tracts occupy residues 267–276 (HPVSQTQHAS) and 317–329 (SSVY…TSLG).

The protein belongs to the peptidase S54 family.

The protein resides in the golgi apparatus. Its subcellular location is the cis-Golgi network membrane. The chain is Rhomboid domain-containing protein 2 (RHBDD2) from Homo sapiens (Human).